The sequence spans 552 residues: DNA ligase (552 aa).

Glu-229 is a binding site for ATP. Lys-231 acts as the N6-AMP-lysine intermediate in catalysis. Positions 236 and 283 each coordinate ATP. Residues Glu-283 and Glu-377 each coordinate Mg(2+). ATP-binding residues include Lys-382 and Lys-397.

Belongs to the ATP-dependent DNA ligase family. As to quaternary structure, interacts with host TOP2A and TOP2B. Mg(2+) is required as a cofactor.

The protein localises to the host cytoplasm. The enzyme catalyses ATP + (deoxyribonucleotide)n-3'-hydroxyl + 5'-phospho-(deoxyribonucleotide)m = (deoxyribonucleotide)n+m + AMP + diphosphate.. DNA ligase that seals nicks in double-stranded DNA during DNA replication, DNA recombination and DNA repair. Recruits cellular topoisomerase II to sites of viral replication and assembly. Contributes to the repair of the viral genome following UV irradiation. This is DNA ligase (OPG180) from Vaccinia virus (strain Western Reserve) (VACV).